A 333-amino-acid chain; its full sequence is 4-hydroxy-3-methylbut-2-enyl diphosphate reductase (333 aa).

Residue Cys20 coordinates [4Fe-4S] cluster. The (2E)-4-hydroxy-3-methylbut-2-enyl diphosphate site is built by His49 and His82. 2 residues coordinate dimethylallyl diphosphate: His49 and His82. Isopentenyl diphosphate is bound by residues His49 and His82. Position 104 (Cys104) interacts with [4Fe-4S] cluster. Position 132 (His132) interacts with (2E)-4-hydroxy-3-methylbut-2-enyl diphosphate. His132 is a binding site for dimethylallyl diphosphate. His132 provides a ligand contact to isopentenyl diphosphate. Glu134 functions as the Proton donor in the catalytic mechanism. Thr172 serves as a coordination point for (2E)-4-hydroxy-3-methylbut-2-enyl diphosphate. A [4Fe-4S] cluster-binding site is contributed by Cys202. The (2E)-4-hydroxy-3-methylbut-2-enyl diphosphate site is built by Ser230, Ser231, Asn232, and Ser274. Dimethylallyl diphosphate is bound by residues Ser230, Ser231, Asn232, and Ser274. Ser230, Ser231, Asn232, and Ser274 together coordinate isopentenyl diphosphate.

It belongs to the IspH family. The cofactor is [4Fe-4S] cluster.

It carries out the reaction isopentenyl diphosphate + 2 oxidized [2Fe-2S]-[ferredoxin] + H2O = (2E)-4-hydroxy-3-methylbut-2-enyl diphosphate + 2 reduced [2Fe-2S]-[ferredoxin] + 2 H(+). The catalysed reaction is dimethylallyl diphosphate + 2 oxidized [2Fe-2S]-[ferredoxin] + H2O = (2E)-4-hydroxy-3-methylbut-2-enyl diphosphate + 2 reduced [2Fe-2S]-[ferredoxin] + 2 H(+). It functions in the pathway isoprenoid biosynthesis; dimethylallyl diphosphate biosynthesis; dimethylallyl diphosphate from (2E)-4-hydroxy-3-methylbutenyl diphosphate: step 1/1. The protein operates within isoprenoid biosynthesis; isopentenyl diphosphate biosynthesis via DXP pathway; isopentenyl diphosphate from 1-deoxy-D-xylulose 5-phosphate: step 6/6. Functionally, catalyzes the conversion of 1-hydroxy-2-methyl-2-(E)-butenyl 4-diphosphate (HMBPP) into a mixture of isopentenyl diphosphate (IPP) and dimethylallyl diphosphate (DMAPP). Acts in the terminal step of the DOXP/MEP pathway for isoprenoid precursor biosynthesis. In Polaromonas sp. (strain JS666 / ATCC BAA-500), this protein is 4-hydroxy-3-methylbut-2-enyl diphosphate reductase.